Here is a 381-residue protein sequence, read N- to C-terminus: Cobalt-precorrin-5B C(1)-methyltransferase (381 aa).

The protein belongs to the CbiD family.

It catalyses the reaction Co-precorrin-5B + S-adenosyl-L-methionine = Co-precorrin-6A + S-adenosyl-L-homocysteine. Its pathway is cofactor biosynthesis; adenosylcobalamin biosynthesis; cob(II)yrinate a,c-diamide from sirohydrochlorin (anaerobic route): step 6/10. Functionally, catalyzes the methylation of C-1 in cobalt-precorrin-5B to form cobalt-precorrin-6A. In Prochlorococcus marinus (strain NATL1A), this protein is Cobalt-precorrin-5B C(1)-methyltransferase.